The primary structure comprises 231 residues: 7-cyano-7-deazaguanine synthase (231 aa).

8-18 is an ATP binding site; the sequence is FSGGQDSTTCL. 4 residues coordinate Zn(2+): Cys188, Cys197, Cys200, and Cys203.

The protein belongs to the QueC family. Requires Zn(2+) as cofactor.

It carries out the reaction 7-carboxy-7-deazaguanine + NH4(+) + ATP = 7-cyano-7-deazaguanine + ADP + phosphate + H2O + H(+). Its pathway is purine metabolism; 7-cyano-7-deazaguanine biosynthesis. Catalyzes the ATP-dependent conversion of 7-carboxy-7-deazaguanine (CDG) to 7-cyano-7-deazaguanine (preQ(0)). The chain is 7-cyano-7-deazaguanine synthase from Salmonella choleraesuis (strain SC-B67).